The sequence spans 254 residues: Ubiquinone/menaquinone biosynthesis C-methyltransferase UbiE (254 aa).

Residues T77, D98, 126-127, and S143 each bind S-adenosyl-L-methionine; that span reads NA.

This sequence belongs to the class I-like SAM-binding methyltransferase superfamily. MenG/UbiE family.

The enzyme catalyses a 2-demethylmenaquinol + S-adenosyl-L-methionine = a menaquinol + S-adenosyl-L-homocysteine + H(+). The catalysed reaction is a 2-methoxy-6-(all-trans-polyprenyl)benzene-1,4-diol + S-adenosyl-L-methionine = a 5-methoxy-2-methyl-3-(all-trans-polyprenyl)benzene-1,4-diol + S-adenosyl-L-homocysteine + H(+). Its pathway is quinol/quinone metabolism; menaquinone biosynthesis; menaquinol from 1,4-dihydroxy-2-naphthoate: step 2/2. It participates in cofactor biosynthesis; ubiquinone biosynthesis. Functionally, methyltransferase required for the conversion of demethylmenaquinol (DMKH2) to menaquinol (MKH2) and the conversion of 2-polyprenyl-6-methoxy-1,4-benzoquinol (DDMQH2) to 2-polyprenyl-3-methyl-6-methoxy-1,4-benzoquinol (DMQH2). This chain is Ubiquinone/menaquinone biosynthesis C-methyltransferase UbiE, found in Blochmanniella floridana.